We begin with the raw amino-acid sequence, 377 residues long: Succinyl-diaminopimelate desuccinylase (377 aa).

Residue His66 participates in Zn(2+) binding. The active site involves Asp68. Zn(2+) is bound at residue Asp99. The Proton acceptor role is filled by Glu133. Positions 134, 163, and 349 each coordinate Zn(2+).

This sequence belongs to the peptidase M20A family. DapE subfamily. Homodimer. It depends on Zn(2+) as a cofactor. Co(2+) serves as cofactor.

It catalyses the reaction N-succinyl-(2S,6S)-2,6-diaminopimelate + H2O = (2S,6S)-2,6-diaminopimelate + succinate. Its pathway is amino-acid biosynthesis; L-lysine biosynthesis via DAP pathway; LL-2,6-diaminopimelate from (S)-tetrahydrodipicolinate (succinylase route): step 3/3. Functionally, catalyzes the hydrolysis of N-succinyl-L,L-diaminopimelic acid (SDAP), forming succinate and LL-2,6-diaminopimelate (DAP), an intermediate involved in the bacterial biosynthesis of lysine and meso-diaminopimelic acid, an essential component of bacterial cell walls. This Legionella pneumophila (strain Lens) protein is Succinyl-diaminopimelate desuccinylase.